Here is a 312-residue protein sequence, read N- to C-terminus: Olfactory receptor 1D2 (312 aa).

Topologically, residues 1-25 (MDGGNQSEGSEFLLLGMSESPEQQR) are extracellular. N-linked (GlcNAc...) asparagine glycosylation is present at N5. Residues 26 to 49 (ILFWMFLSMYLVTVVGNVLIILAI) form a helical membrane-spanning segment. Topologically, residues 50-57 (SSDSRLHT) are cytoplasmic. A helical transmembrane segment spans residues 58-79 (PVYFFLANLSFTDLFFVTNTIP). The Extracellular segment spans residues 80-100 (KMLVNLQSHNKAISYAGCLTQ). C97 and C189 are disulfide-bonded. The helical transmembrane segment at 101-120 (LYFLVSLVALDNLILAVMAY) threads the bilayer. The Cytoplasmic segment spans residues 121–139 (DRYVAICCPLHYTTAMSPK). Residues 140 to 158 (LCILLLSLCWVLSVLYGLI) form a helical membrane-spanning segment. Over 159-196 (HTLLMTRVTFCGSRKIHYIFCEMYVLLRMACSNIQINH) the chain is Extracellular. N-linked (GlcNAc...) asparagine glycosylation occurs at N195. Residues 197-219 (TVLIATGCFIFLIPFGFVIISYV) form a helical membrane-spanning segment. Residues 220 to 236 (LIIRAILRIPSVSKKYK) lie on the Cytoplasmic side of the membrane. The chain crosses the membrane as a helical span at residues 237–259 (AFSTCASHLGAVSLFYGTLCMVY). At 260-271 (LKPLHTYSVKDS) the chain is on the extracellular side. Residues 272 to 291 (VATVMYAVVTPMMNPFIYSL) traverse the membrane as a helical segment. Topologically, residues 292 to 312 (RNKDMHGALGRLLDKHFKRLT) are cytoplasmic.

The protein belongs to the G-protein coupled receptor 1 family. In terms of tissue distribution, expressed in testis. Expressed in spermatozoa (at protein level). Expressed in olfactory epithelium.

Its subcellular location is the cell membrane. Its function is as follows. Odorant receptor which may be involved in sperm chemotaxis. Bourgeonal is a strong chemoattractant for sperm in vitro and is shown to be a strong agonist for OR1D2 in vitro. May also function in olfactory reception. The sequence is that of Olfactory receptor 1D2 (OR1D2) from Homo sapiens (Human).